The sequence spans 155 residues: 3-hydroxyacyl-[acyl-carrier-protein] dehydratase FabZ (155 aa).

Residue His-61 is part of the active site.

This sequence belongs to the thioester dehydratase family. FabZ subfamily.

It localises to the cytoplasm. It catalyses the reaction a (3R)-hydroxyacyl-[ACP] = a (2E)-enoyl-[ACP] + H2O. Involved in unsaturated fatty acids biosynthesis. Catalyzes the dehydration of short chain beta-hydroxyacyl-ACPs and long chain saturated and unsaturated beta-hydroxyacyl-ACPs. The chain is 3-hydroxyacyl-[acyl-carrier-protein] dehydratase FabZ from Synechococcus elongatus (strain ATCC 33912 / PCC 7942 / FACHB-805) (Anacystis nidulans R2).